The following is a 184-amino-acid chain: Chaperone protein YcdY (184 aa).

This sequence belongs to the TorD/DmsD family. As to quaternary structure, interacts with YcdX.

Acts as a chaperone that increases YcdX activity, maybe by facilitating the correct insertion of the zinc ions into the catalytic site of YcdX. Involved in the swarming motility process. This is Chaperone protein YcdY (ycdY) from Escherichia coli (strain K12).